The chain runs to 105 residues: MNKKEKEIIKIILRAYDHHLIDQAAKKIIDIVSKTGVNIEGPIPLPTRKEVFTVLRSPFVNKDSREQFERRTHKRLIQIINPNKKTIESLMHISLPTAIDILLKK.

Belongs to the universal ribosomal protein uS10 family. In terms of assembly, part of the 30S ribosomal subunit.

Its function is as follows. Involved in the binding of tRNA to the ribosomes. The polypeptide is Small ribosomal subunit protein uS10 (Aster yellows witches'-broom phytoplasma (strain AYWB)).